We begin with the raw amino-acid sequence, 447 residues long: N-succinylarginine dihydrolase (447 aa).

Residues 19 to 28, Asn-110, and 137 to 138 contribute to the substrate site; these read AGLSFGNEAS and HR. Glu-174 is an active-site residue. Arg-212 serves as a coordination point for substrate. His-248 is a catalytic residue. Substrate contacts are provided by Asp-250 and Asn-359. The active-site Nucleophile is the Cys-365.

It belongs to the succinylarginine dihydrolase family. As to quaternary structure, homodimer.

It catalyses the reaction N(2)-succinyl-L-arginine + 2 H2O + 2 H(+) = N(2)-succinyl-L-ornithine + 2 NH4(+) + CO2. Its pathway is amino-acid degradation; L-arginine degradation via AST pathway; L-glutamate and succinate from L-arginine: step 2/5. Catalyzes the hydrolysis of N(2)-succinylarginine into N(2)-succinylornithine, ammonia and CO(2). This is N-succinylarginine dihydrolase from Escherichia coli O7:K1 (strain IAI39 / ExPEC).